A 254-amino-acid polypeptide reads, in one-letter code: Vitamin B12 import ATP-binding protein BtuD (254 aa).

The ABC transporter domain maps to 1-239 (MHINHISVGN…ENLQQVFETP (239 aa)). 29–36 (GPNGSGKS) serves as a coordination point for ATP.

It belongs to the ABC transporter superfamily. Vitamin B12 importer (TC 3.A.1.13.1) family. As to quaternary structure, the complex is composed of two ATP-binding proteins (BtuD), two transmembrane proteins (BtuC) and a solute-binding protein (BtuF).

Its subcellular location is the cell inner membrane. The enzyme catalyses an R-cob(III)alamin(out) + ATP + H2O = an R-cob(III)alamin(in) + ADP + phosphate + H(+). In terms of biological role, part of the ABC transporter complex BtuCDF involved in vitamin B12 import. Responsible for energy coupling to the transport system. This is Vitamin B12 import ATP-binding protein BtuD from Vibrio vulnificus (strain YJ016).